The sequence spans 299 residues: Trans-aconitate 3-methyltransferase (299 aa).

Ser-2 carries the post-translational modification N-acetylserine.

The protein belongs to the methyltransferase superfamily. Tam family.

The protein resides in the cytoplasm. It carries out the reaction trans-aconitate + S-adenosyl-L-methionine = (E)-2-(methoxycarbonylmethyl)but-2-enedioate + S-adenosyl-L-homocysteine. In terms of biological role, catalyzes the S-adenosylmethionine monomethyl esterification of trans-aconitate and 3-isopropylmalate at high affinity and of other molecules like cis-aconitate, isocitrate, and citrate at lower velocities and affinities. The function of trans-aconitate methylation appears to be in reducing the toxicity of this spontaneous breakdown product of cis-aconitate. The role of 3-isopropylmalate methylation is unclear but may represent a metabolic branch at 3-isopropylmalate, where some of the material is taken in the pathway leading to leucine and some is taken in a pathway to the 3-isopropylmalate methyl ester, a molecule that provides a signal to switch from vegetative to invasive growth in response to amino acid starvation. The protein is Trans-aconitate 3-methyltransferase (TMT1) of Saccharomyces cerevisiae (strain YJM789) (Baker's yeast).